Here is a 436-residue protein sequence, read N- to C-terminus: MCIVFSPRETVSELDRFIIGQNDAKRSVAIALRNRWRRQQLDEPMREEVMPKNILMIGPTGVGKTGIARRLAKLSGAPFVKVEATKFTEVGYVGRDVEQIIRDLVEIAVSLVREKKRDEIKEKAHMNAEERVLDALVGKTASPATRDSFRKKLREGELDEKEIEIEVADNNSNSASTFDIPGMPGAQMGIMNLSDILGKMGNRTKVRKTTVRDAFKPLIDDESEKLLDQEQIIQEALRVAENDGIVFIDEIDKIATKDGGASAAVSREGVQRDLLPLVEGTTIATKYGQIKTDHILFIASGAFHVSKPSDLLPELQGRLPIRVELNPLTREDLRRILTEPEASLIKQYIALMATEEVHLEITDDAIDALADIAVDLNARIENIGARRLQTVMERVLDEISFTAPDKAGTSFKIDAAYVRKSIGELAADIDLSRFIL.

Residues I19, 61 to 65 (GVGKT), D249, E314, and R386 contribute to the ATP site.

It belongs to the ClpX chaperone family. HslU subfamily. A double ring-shaped homohexamer of HslV is capped on each side by a ring-shaped HslU homohexamer. The assembly of the HslU/HslV complex is dependent on binding of ATP.

The protein localises to the cytoplasm. Its function is as follows. ATPase subunit of a proteasome-like degradation complex; this subunit has chaperone activity. The binding of ATP and its subsequent hydrolysis by HslU are essential for unfolding of protein substrates subsequently hydrolyzed by HslV. HslU recognizes the N-terminal part of its protein substrates and unfolds these before they are guided to HslV for hydrolysis. The sequence is that of ATP-dependent protease ATPase subunit HslU from Bartonella tribocorum (strain CIP 105476 / IBS 506).